The primary structure comprises 932 residues: Phosphoenolpyruvate carboxylase (932 aa).

Catalysis depends on residues His164 and Lys594.

It belongs to the PEPCase type 1 family. Requires Mg(2+) as cofactor.

It catalyses the reaction oxaloacetate + phosphate = phosphoenolpyruvate + hydrogencarbonate. Functionally, forms oxaloacetate, a four-carbon dicarboxylic acid source for the tricarboxylic acid cycle. This chain is Phosphoenolpyruvate carboxylase, found in Bradyrhizobium diazoefficiens (strain JCM 10833 / BCRC 13528 / IAM 13628 / NBRC 14792 / USDA 110).